A 344-amino-acid chain; its full sequence is Dihydroorotate dehydrogenase (quinone) (344 aa).

Residues 61 to 65 (AGLDK) and Thr85 contribute to the FMN site. Lys65 is a binding site for substrate. Position 110–114 (110–114 (NRMGF)) interacts with substrate. The FMN site is built by Asn138 and Asn171. Asn171 is a binding site for substrate. Ser174 acts as the Nucleophile in catalysis. Asn176 serves as a coordination point for substrate. FMN contacts are provided by Lys216 and Thr244. A substrate-binding site is contributed by 245–246 (NT). FMN is bound by residues Gly267, Gly296, and 317-318 (YS).

This sequence belongs to the dihydroorotate dehydrogenase family. Type 2 subfamily. As to quaternary structure, monomer. The cofactor is FMN.

The protein localises to the cell membrane. It carries out the reaction (S)-dihydroorotate + a quinone = orotate + a quinol. Its pathway is pyrimidine metabolism; UMP biosynthesis via de novo pathway; orotate from (S)-dihydroorotate (quinone route): step 1/1. Catalyzes the conversion of dihydroorotate to orotate with quinone as electron acceptor. The protein is Dihydroorotate dehydrogenase (quinone) of Psychrobacter cryohalolentis (strain ATCC BAA-1226 / DSM 17306 / VKM B-2378 / K5).